Here is a 238-residue protein sequence, read N- to C-terminus: tRNA (guanine-N(7)-)-methyltransferase (238 aa).

S-adenosyl-L-methionine is bound by residues Glu-70, Asp-95, Asp-122, and Asp-145. Asp-145 is an active-site residue. Substrate is bound by residues Lys-149, Asp-181, and 216–219 (TKFE).

It belongs to the class I-like SAM-binding methyltransferase superfamily. TrmB family.

It carries out the reaction guanosine(46) in tRNA + S-adenosyl-L-methionine = N(7)-methylguanosine(46) in tRNA + S-adenosyl-L-homocysteine. Its pathway is tRNA modification; N(7)-methylguanine-tRNA biosynthesis. Functionally, catalyzes the formation of N(7)-methylguanine at position 46 (m7G46) in tRNA. This chain is tRNA (guanine-N(7)-)-methyltransferase, found in Neisseria gonorrhoeae (strain ATCC 700825 / FA 1090).